The primary structure comprises 218 residues: Phosphatidylserine decarboxylase proenzyme (218 aa).

Residue Ser183 is the Schiff-base intermediate with substrate; via pyruvic acid of the active site. Ser183 carries the pyruvic acid (Ser); by autocatalysis modification.

Belongs to the phosphatidylserine decarboxylase family. PSD-A subfamily. In terms of assembly, heterodimer of a large membrane-associated beta subunit and a small pyruvoyl-containing alpha subunit. It depends on pyruvate as a cofactor. Post-translationally, is synthesized initially as an inactive proenzyme. Formation of the active enzyme involves a self-maturation process in which the active site pyruvoyl group is generated from an internal serine residue via an autocatalytic post-translational modification. Two non-identical subunits are generated from the proenzyme in this reaction, and the pyruvate is formed at the N-terminus of the alpha chain, which is derived from the carboxyl end of the proenzyme. The post-translation cleavage follows an unusual pathway, termed non-hydrolytic serinolysis, in which the side chain hydroxyl group of the serine supplies its oxygen atom to form the C-terminus of the beta chain, while the remainder of the serine residue undergoes an oxidative deamination to produce ammonia and the pyruvoyl prosthetic group on the alpha chain.

It localises to the cell membrane. It carries out the reaction a 1,2-diacyl-sn-glycero-3-phospho-L-serine + H(+) = a 1,2-diacyl-sn-glycero-3-phosphoethanolamine + CO2. Its pathway is phospholipid metabolism; phosphatidylethanolamine biosynthesis; phosphatidylethanolamine from CDP-diacylglycerol: step 2/2. Functionally, catalyzes the formation of phosphatidylethanolamine (PtdEtn) from phosphatidylserine (PtdSer). In Magnetococcus marinus (strain ATCC BAA-1437 / JCM 17883 / MC-1), this protein is Phosphatidylserine decarboxylase proenzyme.